Reading from the N-terminus, the 319-residue chain is tRNA-cytidine(32) 2-sulfurtransferase (319 aa).

The PP-loop motif signature appears at Ser43–Ser48. The [4Fe-4S] cluster site is built by Cys118, Cys121, and Cys209.

This sequence belongs to the TtcA family. Homodimer. Requires Mg(2+) as cofactor. [4Fe-4S] cluster is required as a cofactor.

The protein localises to the cytoplasm. The catalysed reaction is cytidine(32) in tRNA + S-sulfanyl-L-cysteinyl-[cysteine desulfurase] + AH2 + ATP = 2-thiocytidine(32) in tRNA + L-cysteinyl-[cysteine desulfurase] + A + AMP + diphosphate + H(+). Its pathway is tRNA modification. Catalyzes the ATP-dependent 2-thiolation of cytidine in position 32 of tRNA, to form 2-thiocytidine (s(2)C32). The sulfur atoms are provided by the cysteine/cysteine desulfurase (IscS) system. The sequence is that of tRNA-cytidine(32) 2-sulfurtransferase from Neisseria meningitidis serogroup C (strain 053442).